The chain runs to 201 residues: Small ribosomal subunit protein uS4c (201 aa).

The interval 13-43 (RRLGDLPGLSRKAIKRPYPPGEHGQKPRKPS) is disordered. The S4 RNA-binding domain occupies 90-154 (MRLDNTIFRL…SKQLVESYLA (65 aa)).

This sequence belongs to the universal ribosomal protein uS4 family. Part of the 30S ribosomal subunit. Contacts protein S5. The interaction surface between S4 and S5 is involved in control of translational fidelity.

Its subcellular location is the plastid. The protein localises to the chloroplast. One of the primary rRNA binding proteins, it binds directly to 16S rRNA where it nucleates assembly of the body of the 30S subunit. Functionally, with S5 and S12 plays an important role in translational accuracy. The sequence is that of Small ribosomal subunit protein uS4c (rps4) from Porphyra purpurea (Red seaweed).